The sequence spans 472 residues: Ribosomal protein uS12 methylthiotransferase RimO (472 aa).

The MTTase N-terminal domain maps to 33-143 (NRIGFVSLGC…VLKHVHKYVP (111 aa)). [4Fe-4S] cluster is bound by residues Cys42, Cys78, Cys107, Cys175, Cys179, and Cys182. The Radical SAM core domain occupies 161–398 (LTPKHYAYLK…MELQAEISAE (238 aa)). Positions 401–467 (ARFVGRTLDI…EHDLWAEVVD (67 aa)) constitute a TRAM domain.

Belongs to the methylthiotransferase family. RimO subfamily. The cofactor is [4Fe-4S] cluster.

Its subcellular location is the cytoplasm. It catalyses the reaction L-aspartate(89)-[ribosomal protein uS12]-hydrogen + (sulfur carrier)-SH + AH2 + 2 S-adenosyl-L-methionine = 3-methylsulfanyl-L-aspartate(89)-[ribosomal protein uS12]-hydrogen + (sulfur carrier)-H + 5'-deoxyadenosine + L-methionine + A + S-adenosyl-L-homocysteine + 2 H(+). Functionally, catalyzes the methylthiolation of an aspartic acid residue of ribosomal protein uS12. This is Ribosomal protein uS12 methylthiotransferase RimO from Shewanella putrefaciens (strain CN-32 / ATCC BAA-453).